Here is a 268-residue protein sequence, read N- to C-terminus: MKFVSFNINGLRARPHQLEAIVEKHQPDVIGLQETKVHDEMFPLEEVAKLGYNVFYHGQKGHYGVALLTKATPISVRRGFPDDGEEAQRRIIMAEIPSPLGNITVINGYFPQGESRDHPLKFPAKAQFYQNLQNYLETELKCDNPVLIMGDMNISPTDLDIGIGEENRKRWLRTGKCSFLPEEREWMSRLLKWGLVDTFRQANPQTMDKFSWFDYRSKGFVDNRGLRIDLLLASAPLAERCAETGIDYDIRSMEKPSDHAPVWATFRV.

Glutamate 34 is a Mg(2+) binding site. Tyrosine 109 is an active-site residue. The Mg(2+) site is built by aspartate 151, asparagine 153, and aspartate 258. Catalysis depends on aspartate 151, which acts as the Proton donor/acceptor.

The protein belongs to the DNA repair enzymes AP/ExoA family. Monomer. The cofactor is Mg(2+). Mn(2+) serves as cofactor.

The catalysed reaction is Exonucleolytic cleavage in the 3'- to 5'-direction to yield nucleoside 5'-phosphates.. In terms of biological role, major apurinic-apyrimidinic endonuclease of E.coli. It removes the damaged DNA at cytosines and guanines by cleaving on the 3'-side of the AP site by a beta-elimination reaction. It exhibits 3'-5'-exonuclease, 3'-phosphomonoesterase, 3'-repair diesterase and ribonuclease H activities. This chain is Exodeoxyribonuclease III (xthA), found in Salmonella typhi.